Here is a 136-residue protein sequence, read N- to C-terminus: Classical arabinogalactan protein 11 (136 aa).

Positions 1–20 (MARLFVVVALLALAVGTVFA) are cleaved as a signal peptide. Composition is skewed to low complexity over residues 24-56 (PSAA…ASSP), 68-81 (SAAS…APTV), and 89-107 (PEAD…PAAA). Residues 24 to 115 (PSAAPTASPT…AAESPKSGAT (92 aa)) are disordered. Serine 112 is lipidated: GPI-anchor amidated serine. The propeptide at 113–136 (GATTNVKLSIAGTVAAAGFFIFSL) is removed in mature form.

The protein belongs to the classical AGP family. In terms of processing, O-glycosylated on the hydroxyproline residues.

The protein resides in the cell membrane. In terms of biological role, proteoglycan that seems to be implicated in diverse developmental roles such as differentiation, cell-cell recognition, embryogenesis and programmed cell death. In Arabidopsis thaliana (Mouse-ear cress), this protein is Classical arabinogalactan protein 11 (AGP11).